Here is a 239-residue protein sequence, read N- to C-terminus: Pyridoxine 5'-phosphate synthase (239 aa).

Residue Asn-7 participates in 3-amino-2-oxopropyl phosphate binding. 9–10 (DH) provides a ligand contact to 1-deoxy-D-xylulose 5-phosphate. Arg-18 contacts 3-amino-2-oxopropyl phosphate. His-43 functions as the Proton acceptor in the catalytic mechanism. Residues Arg-45 and His-50 each contribute to the 1-deoxy-D-xylulose 5-phosphate site. The active-site Proton acceptor is the Glu-70. Thr-100 serves as a coordination point for 1-deoxy-D-xylulose 5-phosphate. The active-site Proton donor is His-191. 3-amino-2-oxopropyl phosphate contacts are provided by residues Gly-192 and 213-214 (GH).

The protein belongs to the PNP synthase family. In terms of assembly, homooctamer; tetramer of dimers.

Its subcellular location is the cytoplasm. The enzyme catalyses 3-amino-2-oxopropyl phosphate + 1-deoxy-D-xylulose 5-phosphate = pyridoxine 5'-phosphate + phosphate + 2 H2O + H(+). It participates in cofactor biosynthesis; pyridoxine 5'-phosphate biosynthesis; pyridoxine 5'-phosphate from D-erythrose 4-phosphate: step 5/5. Functionally, catalyzes the complicated ring closure reaction between the two acyclic compounds 1-deoxy-D-xylulose-5-phosphate (DXP) and 3-amino-2-oxopropyl phosphate (1-amino-acetone-3-phosphate or AAP) to form pyridoxine 5'-phosphate (PNP) and inorganic phosphate. In Geotalea uraniireducens (strain Rf4) (Geobacter uraniireducens), this protein is Pyridoxine 5'-phosphate synthase.